The primary structure comprises 258 residues: Tryptophan synthase alpha chain (258 aa).

Residues E47 and D58 each act as proton acceptor in the active site.

It belongs to the TrpA family. In terms of assembly, tetramer of two alpha and two beta chains.

The enzyme catalyses (1S,2R)-1-C-(indol-3-yl)glycerol 3-phosphate + L-serine = D-glyceraldehyde 3-phosphate + L-tryptophan + H2O. Its pathway is amino-acid biosynthesis; L-tryptophan biosynthesis; L-tryptophan from chorismate: step 5/5. Functionally, the alpha subunit is responsible for the aldol cleavage of indoleglycerol phosphate to indole and glyceraldehyde 3-phosphate. In Bacillus mycoides (strain KBAB4) (Bacillus weihenstephanensis), this protein is Tryptophan synthase alpha chain.